The primary structure comprises 407 residues: Aminomethyltransferase, mitochondrial (407 aa).

A mitochondrion-targeting transit peptide spans 1-29; sequence MRGGLWQVGQSITRRLGQSDKKTIVRRWY. Positions 234, 265, and 403 each coordinate substrate.

Belongs to the GcvT family. In terms of assembly, the glycine cleavage system is composed of four proteins: P, T, L and H.

It is found in the mitochondrion. The catalysed reaction is N(6)-[(R)-S(8)-aminomethyldihydrolipoyl]-L-lysyl-[protein] + (6S)-5,6,7,8-tetrahydrofolate = N(6)-[(R)-dihydrolipoyl]-L-lysyl-[protein] + (6R)-5,10-methylene-5,6,7,8-tetrahydrofolate + NH4(+). Its function is as follows. The glycine cleavage system catalyzes the degradation of glycine. This Flaveria trinervia (Clustered yellowtops) protein is Aminomethyltransferase, mitochondrial (GDCST).